The following is a 157-amino-acid chain: Small ribosomal subunit protein uS7 (157 aa).

Belongs to the universal ribosomal protein uS7 family. In terms of assembly, part of the 30S ribosomal subunit. Contacts proteins S9 and S11.

Its function is as follows. One of the primary rRNA binding proteins, it binds directly to 16S rRNA where it nucleates assembly of the head domain of the 30S subunit. Is located at the subunit interface close to the decoding center, probably blocks exit of the E-site tRNA. The polypeptide is Small ribosomal subunit protein uS7 (Psychrobacter cryohalolentis (strain ATCC BAA-1226 / DSM 17306 / VKM B-2378 / K5)).